The primary structure comprises 431 residues: Enolase (431 aa).

Glutamine 164 serves as a coordination point for (2R)-2-phosphoglycerate. The active-site Proton donor is glutamate 206. The Mg(2+) site is built by aspartate 243, glutamate 288, and aspartate 315. The (2R)-2-phosphoglycerate site is built by lysine 340, arginine 369, serine 370, and lysine 391. Lysine 340 serves as the catalytic Proton acceptor.

The protein belongs to the enolase family. Requires Mg(2+) as cofactor.

The protein localises to the cytoplasm. The protein resides in the secreted. It is found in the cell surface. It catalyses the reaction (2R)-2-phosphoglycerate = phosphoenolpyruvate + H2O. The protein operates within carbohydrate degradation; glycolysis; pyruvate from D-glyceraldehyde 3-phosphate: step 4/5. Its function is as follows. Catalyzes the reversible conversion of 2-phosphoglycerate (2-PG) into phosphoenolpyruvate (PEP). It is essential for the degradation of carbohydrates via glycolysis. The sequence is that of Enolase from Fervidobacterium nodosum (strain ATCC 35602 / DSM 5306 / Rt17-B1).